The following is a 334-amino-acid chain: Protein-methionine-sulfoxide reductase catalytic subunit MsrP (334 aa).

Positions 1 to 44 form a signal peptide, tat-type signal; sequence MKKNQFLKESDVTAESVFFMKRRQVLKALGISAAALSLPHAAHA. Mo-molybdopterin contacts are provided by residues Asn88, 91-92, Cys146, Thr181, Asn233, Arg238, and 249-251; these read YE and GIK.

It belongs to the MsrP family. Heterodimer of a catalytic subunit (MsrP) and a heme-binding subunit (MsrQ). The cofactor is Mo-molybdopterin. Post-translationally, predicted to be exported by the Tat system. The position of the signal peptide cleavage has not been experimentally proven.

Its subcellular location is the periplasm. It catalyses the reaction L-methionyl-[protein] + a quinone + H2O = L-methionyl-(S)-S-oxide-[protein] + a quinol. It carries out the reaction L-methionyl-[protein] + a quinone + H2O = L-methionyl-(R)-S-oxide-[protein] + a quinol. Its function is as follows. Part of the MsrPQ system that repairs oxidized periplasmic proteins containing methionine sulfoxide residues (Met-O), using respiratory chain electrons. Thus protects these proteins from oxidative-stress damage caused by reactive species of oxygen and chlorine generated by the host defense mechanisms. MsrPQ is essential for the maintenance of envelope integrity under bleach stress, rescuing a wide series of structurally unrelated periplasmic proteins from methionine oxidation, including the primary periplasmic chaperone SurA and the lipoprotein Pal. The catalytic subunit MsrP is non-stereospecific, being able to reduce both (R-) and (S-) diastereoisomers of methionine sulfoxide. This is Protein-methionine-sulfoxide reductase catalytic subunit MsrP from Escherichia coli O157:H7.